The sequence spans 471 residues: Ubiquitin carboxyl-terminal hydrolase calypso (471 aa).

A UCH catalytic domain is found at 45–276; it reads GWLELESDPG…IRFNLMAVVP (232 aa). Cys131 acts as the Nucleophile in catalysis. His213 (proton donor) is an active-site residue. Coiled coils occupy residues 240-256 and 298-324; these read WEDS…VMAE and GTLQ…DTPT. The interval 307–326 is disordered; sequence DEQGESGNGDSQRPDTPTTL. Positions 314-326 are enriched in polar residues; sequence NGDSQRPDTPTTL. Positions 375-403 constitute a ULD domain; the sequence is NYDKFICTFLSMLAHQGVLGELVSQHLLP. The segment at 405–471 is positively charged C-terminal tail required for binding nucleosomes; it reads KKVSGQGAAN…KGRNKCRKRK (67 aa). The disordered stretch occupies residues 412–471; that stretch reads AANRISKQSTTASAGGSTAAGTASTPKTQQQQAAAAKNGKSPSKTPGRRRKGRNKCRKRK. Over residues 420–447 the composition is skewed to low complexity; it reads STTASAGGSTAAGTASTPKTQQQQAAAA. Basic residues predominate over residues 457 to 471; that stretch reads PGRRRKGRNKCRKRK.

Belongs to the peptidase C12 family. BAP1 subfamily. In terms of assembly, catalytic component of the polycomb repressive deubiquitinase (PR-DUB) complex, at least composed of caly/calypso, Asx and sba (MBD5/6 homolog). The PR-DUB complex associates with nucleosomes to mediate deubiquitination of histone H2AK118ub1 substrates; the association requires the positively charged C-terminal tail of caly, probably due to direct binding of DNA. Interacts (via ULD domain) with Asx (via DEUBAD domain); the interaction produces a stable heterodimer with a composite binding site for ubiquitin. Homodimerizes (via coiled-coil hinge-region between the UCH and ULD domains) to mediate assembly of 2 copies of the caly-Asx heterodimer into a bisymmetric tetramer; dimerization enhances PR-DUB association with nucleosomes.

It localises to the nucleus. It carries out the reaction Thiol-dependent hydrolysis of ester, thioester, amide, peptide and isopeptide bonds formed by the C-terminal Gly of ubiquitin (a 76-residue protein attached to proteins as an intracellular targeting signal).. Its function is as follows. Catalytic component of the polycomb repressive deubiquitinase (PR-DUB) complex, a complex that specifically mediates deubiquitination of histone H2A monoubiquitinated at 'Lys-119' (H2AK118ub1). Mediates bisymmetric organization of the PR-DUB complex and is involved in association with nucleosomes to mediate deubiquitination. Does not deubiquitinate monoubiquitinated histone H2B. Required to maintain the transcriptionally repressive state of homeotic genes throughout development. The PR-DUB complex has weak or no activity toward 'Lys-48'- and 'Lys-63'-linked polyubiquitin chains. Polycomb group (PcG) protein. The sequence is that of Ubiquitin carboxyl-terminal hydrolase calypso from Drosophila melanogaster (Fruit fly).